We begin with the raw amino-acid sequence, 183 residues long: Calmodulin-like protein 3 (183 aa).

4 EF-hand domains span residues 7-42 (EQIA…LGQS), 43-78 (PTEA…KLRD), 80-115 (GAED…LSDP), and 116-151 (LSDD…KRRQ). The Ca(2+) site is built by Asp20, Asp22, Asp24, Thr26, Glu31, Asp56, Asp58, Ser60, Ser62, Glu67, Asp93, Asp95, Asn97, Glu104, Asp129, Asp131, Asp133, Gln135, and Glu140. A disordered region spans residues 154–183 (MEGHGSGGHRSSNSHKKSGCCGPNSSCTIL). S-palmitoyl cysteine attachment occurs at residues Cys173 and Cys174. Cysteine methyl ester is present on Cys180. Residue Cys180 is the site of S-farnesyl cysteine attachment. The propeptide at 181–183 (TIL) is removed in mature form.

The protein belongs to the calmodulin family.

It is found in the membrane. Potential calcium sensor. In Oryza sativa subsp. japonica (Rice), this protein is Calmodulin-like protein 3 (CML3).